A 181-amino-acid polypeptide reads, in one-letter code: Trafficking protein particle complex subunit 3 homolog (181 aa).

The S-palmitoyl cysteine moiety is linked to residue cysteine 70.

It belongs to the TRAPP small subunits family. BET3 subfamily. As to quaternary structure, homodimer. Part of the multisubunit TRAPP (transport protein particle) complex.

Its subcellular location is the golgi apparatus. It localises to the cis-Golgi network. It is found in the endoplasmic reticulum. In terms of biological role, may play a role in vesicular transport from endoplasmic reticulum to Golgi. Required for the systemic spread of the RNAi response. This chain is Trafficking protein particle complex subunit 3 homolog, found in Caenorhabditis briggsae.